We begin with the raw amino-acid sequence, 518 residues long: GMP synthase [glutamine-hydrolyzing] (518 aa).

The 194-residue stretch at 8-201 folds into the Glutamine amidotransferase type-1 domain; it reads TVLIIDFGSQ…VCKISGIKNN (194 aa). The active-site Nucleophile is Cys85. Residues His175 and Glu177 contribute to the active site. One can recognise a GMPS ATP-PPase domain in the interval 202 to 393; that stretch reads WSMAAYRDQA…LGLPEEFIKR (192 aa). An ATP-binding site is contributed by 229 to 235; the sequence is SGGVDSS.

As to quaternary structure, homodimer.

It catalyses the reaction XMP + L-glutamine + ATP + H2O = GMP + L-glutamate + AMP + diphosphate + 2 H(+). It participates in purine metabolism; GMP biosynthesis; GMP from XMP (L-Gln route): step 1/1. Its function is as follows. Catalyzes the synthesis of GMP from XMP. The chain is GMP synthase [glutamine-hydrolyzing] from Bartonella bacilliformis (strain ATCC 35685 / KC583 / Herrer 020/F12,63).